Here is a 96-residue protein sequence, read N- to C-terminus: ATP-dependent Clp protease adapter protein ClpS (96 aa).

It belongs to the ClpS family. In terms of assembly, binds to the N-terminal domain of the chaperone ClpA.

Its function is as follows. Involved in the modulation of the specificity of the ClpAP-mediated ATP-dependent protein degradation. The chain is ATP-dependent Clp protease adapter protein ClpS from Campylobacter jejuni subsp. jejuni serotype O:2 (strain ATCC 700819 / NCTC 11168).